We begin with the raw amino-acid sequence, 298 residues long: Thymidylate synthase (298 aa).

Residues R25 and R159–R160 each bind dUMP. The active-site Nucleophile is C179. DUMP is bound by residues R200 to D203, N211, and H241 to Y243. D203 is a binding site for (6R)-5,10-methylene-5,6,7,8-tetrahydrofolate. Position 297 (A297) interacts with (6R)-5,10-methylene-5,6,7,8-tetrahydrofolate.

Belongs to the thymidylate synthase family. Bacterial-type ThyA subfamily. Homodimer.

It is found in the cytoplasm. The catalysed reaction is dUMP + (6R)-5,10-methylene-5,6,7,8-tetrahydrofolate = 7,8-dihydrofolate + dTMP. The protein operates within pyrimidine metabolism; dTTP biosynthesis. Its function is as follows. Catalyzes the reductive methylation of 2'-deoxyuridine-5'-monophosphate (dUMP) to 2'-deoxythymidine-5'-monophosphate (dTMP) while utilizing 5,10-methylenetetrahydrofolate (mTHF) as the methyl donor and reductant in the reaction, yielding dihydrofolate (DHF) as a by-product. This enzymatic reaction provides an intracellular de novo source of dTMP, an essential precursor for DNA biosynthesis. The chain is Thymidylate synthase from Cereibacter sphaeroides (strain ATCC 17029 / ATH 2.4.9) (Rhodobacter sphaeroides).